A 125-amino-acid chain; its full sequence is Small ribosomal subunit protein eS8 (125 aa).

The tract at residues 1–20 is disordered; it reads MLWQGESIRKVTGGRRRPAQ.

Belongs to the eukaryotic ribosomal protein eS8 family. As to quaternary structure, part of the 30S ribosomal subunit.

The sequence is that of Small ribosomal subunit protein eS8 from Methanoregula boonei (strain DSM 21154 / JCM 14090 / 6A8).